Reading from the N-terminus, the 123-residue chain is UPF0102 protein SPO0400 (123 aa).

It belongs to the UPF0102 family.

In Ruegeria pomeroyi (strain ATCC 700808 / DSM 15171 / DSS-3) (Silicibacter pomeroyi), this protein is UPF0102 protein SPO0400.